The primary structure comprises 688 residues: G-protein coupled receptor-associated protein LMBRD2 (688 aa).

Residues 1–3 (MSG) are Extracellular-facing. The chain crosses the membrane as a helical span at residues 4–21 (AALGLEIVFVFFLALFLL). The Cytoplasmic segment spans residues 22 to 32 (HRYGDFKKQHR). A helical transmembrane segment spans residues 33-53 (LVIIATLLAWYLCFLIVFILP). The Extracellular portion of the chain corresponds to 54–99 (LDVSTTIYNRCKLAVNSSPAESNSSFVTLAPSKQQCFKPWSYIPNG). Asparagine 76 is a glycosylation site (N-linked (GlcNAc...) asparagine). A helical transmembrane segment spans residues 100 to 120 (IMPIFWRVVYWTSQFLTWILL). Residues 121 to 144 (PFMQSYARSGGFSITGKIKTALIE) are Cytoplasmic-facing. The chain crosses the membrane as a helical span at residues 145 to 165 (NAIYYGTYLLIFGAFLIYVAV). Over 166–180 (NPKFNLQWNQLQTIG) the chain is Extracellular. A helical membrane pass occupies residues 181-201 (IAAANTWGLFLLVLLLGYGLV). The Cytoplasmic segment spans residues 202–381 (EIPRSHWNGA…ECLLRPWFYR (180 aa)). A coiled-coil region spans residues 222 to 254 (FKAAKLMTEKADAEENLEDIMEEVRKVSESIKY). The helical transmembrane segment at 382–402 (VLAVVLAAFSVIVVWSECTFF) threads the bilayer. Topologically, residues 403–426 (STRPVLSLVAVFIQLAEKTYNYIY) are extracellular. Residues 427-447 (IEMACFLTIFFLSICVYSTVF) form a helical membrane-spanning segment. Topologically, residues 448-467 (RIRVFNYYYLASHHQTDAYS) are cytoplasmic. The helical transmembrane segment at 468 to 488 (LLFSGMLFCRLTPPLCLNFLG) threads the bilayer. At 489 to 515 (LTHMDATISHTDAQPTAYTSIMGSMKV) the chain is on the extracellular side. A helical transmembrane segment spans residues 516–536 (LSFIADGFYIYYPMLVVILCI). Topologically, residues 537–688 (ATYFSLGTRC…MSRSRIFEDV (152 aa)) are cytoplasmic. The segment covering 600–617 (REDSTRNRVVHTEQKESS) has biased composition (basic and acidic residues). Residues 600–673 (REDSTRNRVV…ESDSGRYQPG (74 aa)) are disordered. The span at 618-634 (FSETNTNRPLSKYTRTN) shows a compositional bias: polar residues. A compositionally biased stretch (basic and acidic residues) spans 635-644 (GRTERDRIEL).

It belongs to the LIMR family.

It is found in the cell membrane. Functionally, may associate with G-protein coupled receptors and regulate downstream signaling pathways. This Gallus gallus (Chicken) protein is G-protein coupled receptor-associated protein LMBRD2.